The following is a 67-amino-acid chain: DNA-directed RNA polymerase subunit omega (67 aa).

This sequence belongs to the RNA polymerase subunit omega family. As to quaternary structure, the RNAP catalytic core consists of 2 alpha, 1 beta, 1 beta' and 1 omega subunit. When a sigma factor is associated with the core the holoenzyme is formed, which can initiate transcription.

It catalyses the reaction RNA(n) + a ribonucleoside 5'-triphosphate = RNA(n+1) + diphosphate. Functionally, promotes RNA polymerase assembly. Latches the N- and C-terminal regions of the beta' subunit thereby facilitating its interaction with the beta and alpha subunits. The sequence is that of DNA-directed RNA polymerase subunit omega from Bordetella avium (strain 197N).